The chain runs to 138 residues: Ergosterol biosynthetic protein 28 (138 aa).

Residues Leu-17 to Val-33 form a helical membrane-spanning segment. The N-linked (GlcNAc...) asparagine glycan is linked to Asn-40. 3 helical membrane-spanning segments follow: residues Leu-56–Gly-75, Leu-87–Gly-107, and Gly-114–Leu-131.

This sequence belongs to the ERG28 family. As to quaternary structure, heterotetramer of ERG25, ERG26, ERG27 and ERG28. ERG28 acts as a scaffold to tether ERG27 and other 4,4-demethylation-related enzymes, forming a demethylation enzyme complex, in the endoplasmic reticulum. Interacts with ERG25, ERG26 and ERG27. Also interacts with ERG1, ERG3, ERG5, ERG6 and ERG11.

Its subcellular location is the endoplasmic reticulum membrane. Its function is as follows. Part of the third module of ergosterol biosynthesis pathway that includes the late steps of the pathway. ERG28 has a role as a scaffold to help anchor the catalytic components of the C-4 demethylation complex ERG25, ERG26 and ERG27 to the endoplasmic reticulum. The third module or late pathway involves the ergosterol synthesis itself through consecutive reactions that mainly occur in the endoplasmic reticulum (ER) membrane. Firstly, the squalene synthase ERG9 catalyzes the condensation of 2 farnesyl pyrophosphate moieties to form squalene, which is the precursor of all steroids. Squalene synthase is crucial for balancing the incorporation of farnesyl diphosphate (FPP) into sterol and nonsterol isoprene synthesis. Secondly, the squalene epoxidase ERG1 catalyzes the stereospecific oxidation of squalene to (S)-2,3-epoxysqualene, which is considered to be a rate-limiting enzyme in steroid biosynthesis. Then, the lanosterol synthase ERG7 catalyzes the cyclization of (S)-2,3 oxidosqualene to lanosterol, a reaction that forms the sterol core. In the next steps, lanosterol is transformed to zymosterol through a complex process involving various demethylation, reduction and desaturation reactions. The lanosterol 14-alpha-demethylase ERG11 (also known as CYP51) catalyzes C14-demethylation of lanosterol to produce 4,4'-dimethyl cholesta-8,14,24-triene-3-beta-ol, which is critical for ergosterol biosynthesis. The C-14 reductase ERG24 reduces the C14=C15 double bond of 4,4-dimethyl-cholesta-8,14,24-trienol to produce 4,4-dimethyl-cholesta-8,24-dienol. 4,4-dimethyl-cholesta-8,24-dienol is substrate of the C-4 demethylation complex ERG25-ERG26-ERG27 in which ERG25 catalyzes the three-step monooxygenation required for the demethylation of 4,4-dimethyl and 4alpha-methylsterols, ERG26 catalyzes the oxidative decarboxylation that results in a reduction of the 3-beta-hydroxy group at the C-3 carbon to an oxo group, and ERG27 is responsible for the reduction of the keto group on the C-3. ERG28 has a role as a scaffold to help anchor ERG25, ERG26 and ERG27 to the endoplasmic reticulum and ERG29 regulates the activity of the iron-containing C4-methylsterol oxidase ERG25. Then, the sterol 24-C-methyltransferase ERG6 catalyzes the methyl transfer from S-adenosyl-methionine to the C-24 of zymosterol to form fecosterol. The C-8 sterol isomerase ERG2 catalyzes the reaction which results in unsaturation at C-7 in the B ring of sterols and thus converts fecosterol to episterol. The sterol-C5-desaturase ERG3 then catalyzes the introduction of a C-5 double bond in the B ring to produce 5-dehydroepisterol. The C-22 sterol desaturase ERG5 further converts 5-dehydroepisterol into ergosta-5,7,22,24(28)-tetraen-3beta-ol by forming the C-22(23) double bond in the sterol side chain. Finally, ergosta-5,7,22,24(28)-tetraen-3beta-ol is substrate of the C-24(28) sterol reductase ERG4 to produce ergosterol. The protein is Ergosterol biosynthetic protein 28 of Candida albicans (strain SC5314 / ATCC MYA-2876) (Yeast).